The primary structure comprises 600 residues: Baculoviral IAP repeat-containing protein 3 (600 aa).

One copy of the BIR 1 repeat lies at 27-94 (ELYRLSTYSA…RKLYPSCNFV (68 aa)). At Ser138 the chain carries Phosphoserine. BIR repeat units lie at residues 167–233 (EKAR…CPFL) and 253–320 (HAAR…CEYL). Zn(2+) contacts are provided by Cys290, Cys293, His310, and Cys317. A CARD domain is found at 436-525 (EESDDLALIR…ALYRDIFVQQ (90 aa)). The RING-type zinc-finger motif lies at 553–588 (CKVCMDREVSIVFIPCGHLVVCKDCAPSLRKCPICR).

Belongs to the IAP family. Interacts with PRSS25; the interaction inhibits apoptotic suppressor activity. The BIR motifs region interacts with TNF receptor associated factors 1 and 2 (TRAF1 and TRAF2) to form a heteromeric complex, which is then recruited to the tumor necrosis factor receptor 2 (TNFR2). Interaction with TRAF2 is required for ubiquitination of IKBKE, degradation of NFKBIA and activation of NF-kappa-B. Interacts with RIP1, RIP2, RIP3, RIP4 and USP19. Auto-ubiquitinated and degraded by the proteasome in apoptotic cells.

The protein localises to the cytoplasm. It is found in the nucleus. It carries out the reaction S-ubiquitinyl-[E2 ubiquitin-conjugating enzyme]-L-cysteine + [acceptor protein]-L-lysine = [E2 ubiquitin-conjugating enzyme]-L-cysteine + N(6)-ubiquitinyl-[acceptor protein]-L-lysine.. Its activity is regulated as follows. USP19 regulates the stability of BIRC3/c-IAP2 by preventing its ubiquitination. Functionally, multi-functional protein which regulates not only caspases and apoptosis, but also modulates inflammatory signaling and immunity, mitogenic kinase signaling and cell proliferation, as well as cell invasion and metastasis. Acts as an E3 ubiquitin-protein ligase regulating NF-kappa-B signaling and regulates both canonical and non-canonical NF-kappa-B signaling by acting in opposite directions: acts as a positive regulator of the canonical pathway and suppresses constitutive activation of non-canonical NF-kappa-B signaling. The target proteins for its E3 ubiquitin-protein ligase activity include: RIPK1, RIPK2, RIPK3, RIPK4, CASP3, CASP7, CASP8, IKBKE, TRAF1, and BCL10. Acts as an important regulator of innate immune signaling via regulation of Toll-like receptors (TLRs), Nodlike receptors (NLRs) and RIG-I like receptors (RLRs), collectively referred to as pattern recognition receptors (PRRs). Protects cells from spontaneous formation of the ripoptosome, a large multi-protein complex that has the capability to kill cancer cells in a caspase-dependent and caspase-independent manner. Suppresses ripoptosome formation by ubiquitinating RIPK1 and CASP8. This chain is Baculoviral IAP repeat-containing protein 3 (Birc3), found in Mus musculus (Mouse).